The chain runs to 585 residues: Suppressor of mec-8 and unc-52 protein homolog 2 (585 aa).

A compositionally biased stretch (basic residues) spans 1 to 14 (MKPSKSHHKEKTAR). Disordered stretches follow at residues 1–52 (MKPS…SSFH) and 219–324 (KKKK…PRDK). The segment covering 15–39 (RREEKLEESDNPKYRDRAKERRENQ) has biased composition (basic and acidic residues). R-[ED] repeat units follow at residues 16–17 (RE), 29–30 (RD), 36–37 (RE), and 258–259 (RE). Over residues 276 to 288 (LSTKQEEPPVART) the composition is skewed to basic and acidic residues. R-[ED] repeat units lie at residues 322 to 323 (RD), 436 to 437 (RD), 445 to 446 (RE), 450 to 451 (RE), 540 to 541 (RD), and 542 to 543 (RD). Residues 523 to 585 (FQFGVKMQDG…EAQTPKRSKH (63 aa)) are disordered. Positions 530-548 (QDGRKTRKQNRDRDQKLNN) are enriched in basic and acidic residues. Position 579 is a phosphothreonine (T579).

The protein belongs to the RED family. As to quaternary structure, component of the spliceosome. Interacts with SMU1. Highly expressed in seedlings at 7 days after germination, young flowers before anthesis and developing siliques. Expressed at lower levels in roots, expanding leaves, open flowers, dry seeds and inflorescences. Not detected in senescing leaves.

It is found in the nucleus. Auxiliary spliceosomal protein involved in splicing of specific pre-mRNAs that affect multiple aspects of development. In Arabidopsis thaliana (Mouse-ear cress), this protein is Suppressor of mec-8 and unc-52 protein homolog 2 (SMU2).